A 929-amino-acid chain; its full sequence is Isoleucine--tRNA ligase (929 aa).

The short motif at 58-68 (PYANGDIHIGH) is the 'HIGH' region element. E563 is a binding site for L-isoleucyl-5'-AMP. The 'KMSKS' region motif lies at 605–609 (KMSKS). Position 608 (K608) interacts with ATP. The Zn(2+) site is built by C892, C895, C912, and C915.

The protein belongs to the class-I aminoacyl-tRNA synthetase family. IleS type 1 subfamily. In terms of assembly, monomer. Zn(2+) is required as a cofactor.

It is found in the cytoplasm. The enzyme catalyses tRNA(Ile) + L-isoleucine + ATP = L-isoleucyl-tRNA(Ile) + AMP + diphosphate. Functionally, catalyzes the attachment of isoleucine to tRNA(Ile). As IleRS can inadvertently accommodate and process structurally similar amino acids such as valine, to avoid such errors it has two additional distinct tRNA(Ile)-dependent editing activities. One activity is designated as 'pretransfer' editing and involves the hydrolysis of activated Val-AMP. The other activity is designated 'posttransfer' editing and involves deacylation of mischarged Val-tRNA(Ile). This Neisseria meningitidis serogroup C (strain 053442) protein is Isoleucine--tRNA ligase.